A 276-amino-acid polypeptide reads, in one-letter code: 3-methyl-2-oxobutanoate hydroxymethyltransferase (276 aa).

Mg(2+)-binding residues include Asp-50 and Asp-89. 3-methyl-2-oxobutanoate contacts are provided by residues 50 to 51 (DS), Asp-89, and Lys-119. Glu-121 contributes to the Mg(2+) binding site. Glu-188 serves as the catalytic Proton acceptor.

This sequence belongs to the PanB family. As to quaternary structure, homodecamer; pentamer of dimers. The cofactor is Mg(2+).

It is found in the cytoplasm. It carries out the reaction 3-methyl-2-oxobutanoate + (6R)-5,10-methylene-5,6,7,8-tetrahydrofolate + H2O = 2-dehydropantoate + (6S)-5,6,7,8-tetrahydrofolate. It functions in the pathway cofactor biosynthesis; (R)-pantothenate biosynthesis; (R)-pantoate from 3-methyl-2-oxobutanoate: step 1/2. Its function is as follows. Catalyzes the reversible reaction in which hydroxymethyl group from 5,10-methylenetetrahydrofolate is transferred onto alpha-ketoisovalerate to form ketopantoate. The chain is 3-methyl-2-oxobutanoate hydroxymethyltransferase from Paracoccus denitrificans (strain Pd 1222).